Consider the following 203-residue polypeptide: Endo-type membrane-bound lytic murein transglycosylase A (203 aa).

The first 15 residues, 1–15 (MKLRWLLILVVFLAG), serve as a signal peptide directing secretion. A lipid anchor (N-palmitoyl cysteine) is attached at cysteine 16. A lipid anchor (S-diacylglycerol cysteine) is attached at cysteine 16.

This sequence belongs to the transglycosylase Slt family.

It localises to the cell outer membrane. It carries out the reaction Endolytic cleavage of the (1-&gt;4)-beta-glycosidic linkage between N-acetylmuramic acid (MurNAc) and N-acetylglucosamine (GlcNAc) residues in peptidoglycan with concomitant formation of a 1,6-anhydrobond in the MurNAc residue.. In terms of biological role, murein-degrading enzyme. May play a role in recycling of muropeptides during cell elongation and/or cell division. Preferentially cleaves at a distance of more than two disaccharide units from the ends of the glycan chain. In Klebsiella pneumoniae subsp. pneumoniae (strain ATCC 700721 / MGH 78578), this protein is Endo-type membrane-bound lytic murein transglycosylase A.